A 184-amino-acid chain; its full sequence is Large ribosomal subunit protein uL5c (184 aa).

The protein belongs to the universal ribosomal protein uL5 family. Part of the 50S ribosomal subunit; contacts the 5S rRNA.

It is found in the plastid. It localises to the chloroplast. In terms of biological role, binds 5S rRNA, forms part of the central protuberance of the 50S subunit. The sequence is that of Large ribosomal subunit protein uL5c (rpl5) from Ostreococcus tauri.